A 134-amino-acid polypeptide reads, in one-letter code: Fluoride-specific ion channel FluC (134 aa).

The next 4 helical transmembrane spans lie at 7 to 27 (LAVA…TIMA), 38 to 58 (GTLL…IVLV), 69 to 89 (LFLF…AAES), and 110 to 130 (VGSL…LLGH). Na(+) is bound by residues Gly-77 and Thr-80.

It belongs to the fluoride channel Fluc/FEX (TC 1.A.43) family.

Its subcellular location is the cell inner membrane. The catalysed reaction is fluoride(in) = fluoride(out). Its activity is regulated as follows. Na(+) is not transported, but it plays an essential structural role and its presence is essential for fluoride channel function. Its function is as follows. Fluoride-specific ion channel. Important for reducing fluoride concentration in the cell, thus reducing its toxicity. The polypeptide is Fluoride-specific ion channel FluC (Legionella pneumophila (strain Lens)).